Consider the following 27-residue polypeptide: Cruzioseptin-14 (27 aa).

In terms of tissue distribution, expressed by the skin glands.

The protein localises to the secreted. Has antimicrobial activity. This is Cruzioseptin-14 from Cruziohyla calcarifer (Splendid leaf frog).